The chain runs to 136 residues: MLFSLRELVQWLGFATFEIFVHLLALLVFSVLLALRVDGLTPGLSWWNVFVPFFAADGLSTYFTTIVSVRLFQDGEKRLAVLRLFWVLTVLSLKFVFEMLLCQKLVEQTRELWFGLITSPVFILLQLLMIRACRVN.

Positions 1–51 are interaction with STING1; the sequence is MLFSLRELVQWLGFATFEIFVHLLALLVFSVLLALRVDGLTPGLSWWNVFV. A run of 4 helical transmembrane segments spans residues 14–34, 50–72, 81–101, and 112–132; these read FATF…VLLA, FVPF…VRLF, VLRL…EMLL, and LWFG…MIRA. A required for lysosomal localization of the STING-TMEM203 complex region spans residues 52–136; it reads PFFAADGLST…LLMIRACRVN (85 aa).

Homodimer. Interacts with ATP2A2 and ITPR3. Interacts with STIM1 and STING1 (via transmembrane domain).

It is found in the endoplasmic reticulum membrane. The protein localises to the endoplasmic reticulum-Golgi intermediate compartment. It localises to the lysosome membrane. In terms of biological role, involved in the regulation of cellular calcium homeotasis. Required for spermatogenesis. Acts as a regulator of STING-mediated inflammatory signaling in macrophages. Forms a complex with STING, promoting the activity of TBK1 kinase and the transcription factor IRF3, leading to activation of type I interferon expression. The chain is Transmembrane protein 203 (Tmem203) from Mus musculus (Mouse).